The following is a 345-amino-acid chain: Phosphoribosylformylglycinamidine cyclo-ligase (345 aa).

The protein belongs to the AIR synthase family.

Its subcellular location is the cytoplasm. The catalysed reaction is 2-formamido-N(1)-(5-O-phospho-beta-D-ribosyl)acetamidine + ATP = 5-amino-1-(5-phospho-beta-D-ribosyl)imidazole + ADP + phosphate + H(+). The protein operates within purine metabolism; IMP biosynthesis via de novo pathway; 5-amino-1-(5-phospho-D-ribosyl)imidazole from N(2)-formyl-N(1)-(5-phospho-D-ribosyl)glycinamide: step 2/2. This Prochlorococcus marinus (strain MIT 9313) protein is Phosphoribosylformylglycinamidine cyclo-ligase.